Reading from the N-terminus, the 659-residue chain is Anoctamin-10 (659 aa).

Residues 1–207 (MRVTLSTLDT…DSIRSYFGET (207 aa)) lie on the Cytoplasmic side of the membrane. A helical membrane pass occupies residues 208–228 (IALYFGFLEYFTFALIPMAII). At 229-240 (GLPYYLFVWEDY) the chain is on the extracellular side. A helical transmembrane segment spans residues 241–261 (DKYVIFASFNLIWSTVILEVW). At 262–316 (KRGCANMTYRWGTLVMKRQFEEPRPGFHGVLGINSVTGREEPLYSSYKRQLRIYL) the chain is on the cytoplasmic side. Residues 317 to 337 (VSLPFVCLCLYFSLYVMMIYF) form a helical membrane-spanning segment. The Extracellular segment spans residues 338–352 (DMEDWALSLHEDSGS). A helical membrane pass occupies residues 353-373 (EWTSLLLYVPSIVYAVVIEIM). Residues 374 to 400 (NRLYRYAAEFLTSWENHRLESAYQNHL) are Cytoplasmic-facing. A helical membrane pass occupies residues 401-421 (VLKVLVFNFLNCFASLFYIAF). The Extracellular portion of the chain corresponds to 422–500 (VLKDMKLLRQ…YLGTFDDYLE (79 aa)). Residues 501 to 521 (LFLQFGYVSLFSCVYPLAAAF) traverse the membrane as a helical segment. The Cytoplasmic portion of the chain corresponds to 522-553 (AVLNNFTEVNSDALKMCRVFKRPFAEPSASIG). Residues 554–574 (VWQLAFETMSVISVVTNCALI) form a helical membrane-spanning segment. The Extracellular portion of the chain corresponds to 575–590 (GMSPQVNAVFPESKTD). The chain crosses the membrane as a helical span at residues 591 to 611 (LVLIVVAVEHALLALKFILAF). Over 612–659 (AIPDKPRHIQQKLARLEFESLEALKQQQMKLVAENLKEEYQEDGKEAT) the chain is Cytoplasmic.

Belongs to the anoctamin family. In terms of tissue distribution, predominant expression seen in epithelial tissues.

Its subcellular location is the cell membrane. Does not exhibit calcium-activated chloride channel (CaCC) activity. Can inhibit the activity of ANO1. This is Anoctamin-10 (Ano10) from Mus musculus (Mouse).